The following is a 117-amino-acid chain: NADH-ubiquinone oxidoreductase chain 3 (117 aa).

The next 3 membrane-spanning stretches (helical) occupy residues 1–21 (MKFI…LLLL), 58–78 (FLMT…LPII), and 86–106 (TMIS…TLIL).

The protein belongs to the complex I subunit 3 family.

The protein resides in the mitochondrion membrane. It carries out the reaction a ubiquinone + NADH + 5 H(+)(in) = a ubiquinol + NAD(+) + 4 H(+)(out). In terms of biological role, core subunit of the mitochondrial membrane respiratory chain NADH dehydrogenase (Complex I) that is believed to belong to the minimal assembly required for catalysis. Complex I functions in the transfer of electrons from NADH to the respiratory chain. The immediate electron acceptor for the enzyme is believed to be ubiquinone. The protein is NADH-ubiquinone oxidoreductase chain 3 (ND3) of Apis mellifera ligustica (Common honeybee).